Here is a 425-residue protein sequence, read N- to C-terminus: Serine--tRNA ligase (425 aa).

231-233 (TAE) contributes to the L-serine binding site. 262 to 264 (RSE) provides a ligand contact to ATP. Glu285 contacts L-serine. An ATP-binding site is contributed by 349–352 (EISS). Ser385 contributes to the L-serine binding site.

This sequence belongs to the class-II aminoacyl-tRNA synthetase family. Type-1 seryl-tRNA synthetase subfamily. Homodimer. The tRNA molecule binds across the dimer.

It is found in the cytoplasm. It carries out the reaction tRNA(Ser) + L-serine + ATP = L-seryl-tRNA(Ser) + AMP + diphosphate + H(+). The enzyme catalyses tRNA(Sec) + L-serine + ATP = L-seryl-tRNA(Sec) + AMP + diphosphate + H(+). The protein operates within aminoacyl-tRNA biosynthesis; selenocysteinyl-tRNA(Sec) biosynthesis; L-seryl-tRNA(Sec) from L-serine and tRNA(Sec): step 1/1. Its function is as follows. Catalyzes the attachment of serine to tRNA(Ser). Is also able to aminoacylate tRNA(Sec) with serine, to form the misacylated tRNA L-seryl-tRNA(Sec), which will be further converted into selenocysteinyl-tRNA(Sec). This chain is Serine--tRNA ligase, found in Maricaulis maris (strain MCS10) (Caulobacter maris).